Consider the following 189-residue polypeptide: Peptide deformylase (189 aa).

The Fe cation site is built by cysteine 116 and histidine 159. Residue glutamate 160 is part of the active site. Histidine 163 contacts Fe cation.

Belongs to the polypeptide deformylase family. Fe(2+) serves as cofactor.

It carries out the reaction N-terminal N-formyl-L-methionyl-[peptide] + H2O = N-terminal L-methionyl-[peptide] + formate. Functionally, removes the formyl group from the N-terminal Met of newly synthesized proteins. Requires at least a dipeptide for an efficient rate of reaction. N-terminal L-methionine is a prerequisite for activity but the enzyme has broad specificity at other positions. This chain is Peptide deformylase, found in Limosilactobacillus fermentum (strain NBRC 3956 / LMG 18251) (Lactobacillus fermentum).